Reading from the N-terminus, the 325-residue chain is Ribonucleoside-diphosphate reductase small chain (325 aa).

Aspartate 76, glutamate 107, and histidine 110 together coordinate Fe cation. The active site involves tyrosine 114. Positions 170, 204, and 207 each coordinate Fe cation.

The protein belongs to the ribonucleoside diphosphate reductase small chain family. In terms of assembly, heterodimer of a large and a small subunit. Fe cation serves as cofactor.

The catalysed reaction is a 2'-deoxyribonucleoside 5'-diphosphate + [thioredoxin]-disulfide + H2O = a ribonucleoside 5'-diphosphate + [thioredoxin]-dithiol. In terms of biological role, provides the precursors necessary for DNA synthesis. Catalyzes the biosynthesis of deoxyribonucleotides from the corresponding ribonucleotides. The sequence is that of Ribonucleoside-diphosphate reductase small chain from Encephalitozoon cuniculi (strain GB-M1) (Microsporidian parasite).